The chain runs to 380 residues: Bifunctional dihydropteroate synthase/dihydropteroate reductase (380 aa).

Residues 1 to 104 (MIVKRLNPDA…SQPFGLKHLA (104 aa)) form a dihydropteroate reductase region. Residues 105–380 (QELKSHLKAP…KVFKSLEETD (276 aa)) are dihydropteroate synthase. The Pterin-binding domain occupies 119 to 371 (PQIMAVLNLT…DIDEHIDLIK (253 aa)). A Mg(2+)-binding site is contributed by asparagine 126. Residues aspartate 202, asparagine 221, aspartate 289, lysine 325, and 359-361 (RVH) each bind (7,8-dihydropterin-6-yl)methyl diphosphate.

The protein in the C-terminal section; belongs to the DHPS family. FAD is required as a cofactor. The cofactor is FMN. Mg(2+) serves as cofactor.

The enzyme catalyses (7,8-dihydropterin-6-yl)methyl diphosphate + 4-aminobenzoate = 7,8-dihydropteroate + diphosphate. It catalyses the reaction (6S)-5,6,7,8-tetrahydropteroate + NAD(+) = 7,8-dihydropteroate + NADH + H(+). Its pathway is cofactor biosynthesis; tetrahydrofolate biosynthesis; 7,8-dihydrofolate from 2-amino-4-hydroxy-6-hydroxymethyl-7,8-dihydropteridine diphosphate and 4-aminobenzoate: step 1/2. Bifunctional enzyme that catalyzes the formation of dihydropteroate, the immediate precursor of folic acid and the reduction of dihydropteroate to tetrahydropteroate. The polypeptide is Bifunctional dihydropteroate synthase/dihydropteroate reductase (Helicobacter pylori (strain ATCC 700392 / 26695) (Campylobacter pylori)).